The chain runs to 142 residues: Aspartate 1-decarboxylase (142 aa).

Serine 25 acts as the Schiff-base intermediate with substrate; via pyruvic acid in catalysis. The residue at position 25 (serine 25) is a Pyruvic acid (Ser). Threonine 57 serves as a coordination point for substrate. Tyrosine 58 functions as the Proton donor in the catalytic mechanism. 73-75 (GAA) is a substrate binding site.

This sequence belongs to the PanD family. Heterooctamer of four alpha and four beta subunits. Pyruvate is required as a cofactor. Is synthesized initially as an inactive proenzyme, which is activated by self-cleavage at a specific serine bond to produce a beta-subunit with a hydroxyl group at its C-terminus and an alpha-subunit with a pyruvoyl group at its N-terminus.

It is found in the cytoplasm. The catalysed reaction is L-aspartate + H(+) = beta-alanine + CO2. It functions in the pathway cofactor biosynthesis; (R)-pantothenate biosynthesis; beta-alanine from L-aspartate: step 1/1. Its function is as follows. Catalyzes the pyruvoyl-dependent decarboxylation of aspartate to produce beta-alanine. The chain is Aspartate 1-decarboxylase from Arthrobacter sp. (strain FB24).